The primary structure comprises 430 residues: Histidinol dehydrogenase (430 aa).

Substrate-binding residues include S237, Q259, and H262. Positions 259 and 262 each coordinate Zn(2+). Residues E327 and H328 each act as proton acceptor in the active site. H328, D361, E415, and H420 together coordinate substrate. D361 lines the Zn(2+) pocket. H420 lines the Zn(2+) pocket.

The protein belongs to the histidinol dehydrogenase family. Zn(2+) serves as cofactor.

The enzyme catalyses L-histidinol + 2 NAD(+) + H2O = L-histidine + 2 NADH + 3 H(+). It participates in amino-acid biosynthesis; L-histidine biosynthesis; L-histidine from 5-phospho-alpha-D-ribose 1-diphosphate: step 9/9. In terms of biological role, catalyzes the sequential NAD-dependent oxidations of L-histidinol to L-histidinaldehyde and then to L-histidine. The polypeptide is Histidinol dehydrogenase (Sulfurimonas denitrificans (strain ATCC 33889 / DSM 1251) (Thiomicrospira denitrificans (strain ATCC 33889 / DSM 1251))).